The following is a 1241-amino-acid chain: ATP-dependent helicase/nuclease subunit A (1241 aa).

Residues 12–485 form the UvrD-like helicase ATP-binding domain; the sequence is SQWTDDQWKA…IDLAKNFRSR (474 aa). 33–40 is a binding site for ATP; that stretch reads AAAGSGKT. The UvrD-like helicase C-terminal domain maps to 505–805; it reads GEIDYDADAE…RIMTIHKSKG (301 aa).

The protein belongs to the helicase family. AddA subfamily. In terms of assembly, heterodimer of AddA and AddB/RexB. Requires Mg(2+) as cofactor.

The enzyme catalyses Couples ATP hydrolysis with the unwinding of duplex DNA by translocating in the 3'-5' direction.. It carries out the reaction ATP + H2O = ADP + phosphate + H(+). Its function is as follows. The heterodimer acts as both an ATP-dependent DNA helicase and an ATP-dependent, dual-direction single-stranded exonuclease. Recognizes the chi site generating a DNA molecule suitable for the initiation of homologous recombination. The AddA nuclease domain is required for chi fragment generation; this subunit has the helicase and 3' -&gt; 5' nuclease activities. The chain is ATP-dependent helicase/nuclease subunit A from Bacillus cereus (strain ATCC 10987 / NRS 248).